The primary structure comprises 1351 residues: ABC transporter C family member 6 (1351 aa).

An ABC transmembrane type-1 1 domain is found at 112–397; the sequence is NKYALVSNLF…LPYDIFKAIG (286 aa). 3 helical membrane-spanning segments follow: residues 120–140, 149–169, and 248–268; these read LFII…INYI, SILK…GQSI, and LLCY…VIAL. An ABC transporter 1 domain is found at 474–700; sequence NQDESINKKE…GIDFKSILKT (227 aa). 510 to 517 contributes to the ATP binding site; that stretch reads GVVGSGKT. Residues 701-734 adopt a coiled-coil conformation; sequence KEIKKNVENETDSEELIKNEIEIENEIIDVNNAI. Transmembrane regions (helical) follow at residues 771 to 791, 815 to 835, 904 to 924, 977 to 999, 1002 to 1022, and 1025 to 1045; these read GSSG…QAIF, IGYY…RILL, LISI…LSIA, MFDN…RWVS, LEVM…LFIS, and GLAA…SWGI. Residues 777-1060 form the ABC transmembrane type-1 2 domain; that stretch reads LFITISLFFV…LEVKMNSFQR (284 aa). One can recognise an ABC transporter 2 domain in the interval 1101–1336; that stretch reads IEFKNVEIKY…PNSKFNKLIK (236 aa). 1135–1142 serves as a coordination point for ATP; it reads GRTGAGKT.

The protein belongs to the ABC transporter superfamily. ABCC family. Conjugate transporter (TC 3.A.1.208) subfamily.

It localises to the membrane. The chain is ABC transporter C family member 6 (abcC6) from Dictyostelium discoideum (Social amoeba).